A 234-amino-acid chain; its full sequence is 2-C-methyl-D-erythritol 4-phosphate cytidylyltransferase (234 aa).

It belongs to the IspD/TarI cytidylyltransferase family. IspD subfamily.

The enzyme catalyses 2-C-methyl-D-erythritol 4-phosphate + CTP + H(+) = 4-CDP-2-C-methyl-D-erythritol + diphosphate. Its pathway is isoprenoid biosynthesis; isopentenyl diphosphate biosynthesis via DXP pathway; isopentenyl diphosphate from 1-deoxy-D-xylulose 5-phosphate: step 2/6. Catalyzes the formation of 4-diphosphocytidyl-2-C-methyl-D-erythritol from CTP and 2-C-methyl-D-erythritol 4-phosphate (MEP). The protein is 2-C-methyl-D-erythritol 4-phosphate cytidylyltransferase of Shewanella sediminis (strain HAW-EB3).